A 370-amino-acid polypeptide reads, in one-letter code: Flagellar P-ring protein (370 aa).

The N-terminal stretch at 1–24 (MTLSKWILSFGLSVCLIVSHPVSA) is a signal peptide.

It belongs to the FlgI family. In terms of assembly, the basal body constitutes a major portion of the flagellar organelle and consists of four rings (L,P,S, and M) mounted on a central rod.

The protein localises to the periplasm. Its subcellular location is the bacterial flagellum basal body. Assembles around the rod to form the L-ring and probably protects the motor/basal body from shearing forces during rotation. The chain is Flagellar P-ring protein from Nitrosomonas europaea (strain ATCC 19718 / CIP 103999 / KCTC 2705 / NBRC 14298).